The primary structure comprises 175 residues: MLTSGIVILSGGLLDPNPGLIFWTAVTFVIVLLILKKFAWGPILGALEEREKAIQSSIDRAHTAKDEAEAALRKNKELLTKADAEAEKILREGKEYGEKLRADIVEKAHSEATKMISSAKEEIEQEKRRALDELRNEVADLAVQGAEKILMANLDADKQKAIVSSMIQDLSKHRN.

The helical transmembrane segment at 20 to 40 (LIFWTAVTFVIVLLILKKFAW) threads the bilayer.

Belongs to the ATPase B chain family. As to quaternary structure, F-type ATPases have 2 components, F(1) - the catalytic core - and F(0) - the membrane proton channel. F(1) has five subunits: alpha(3), beta(3), gamma(1), delta(1), epsilon(1). F(0) has four main subunits: a(1), b(2) and c(10-14). The alpha and beta chains form an alternating ring which encloses part of the gamma chain. F(1) is attached to F(0) by a central stalk formed by the gamma and epsilon chains, while a peripheral stalk is formed by the delta and b chains.

It is found in the cell inner membrane. F(1)F(0) ATP synthase produces ATP from ADP in the presence of a proton or sodium gradient. F-type ATPases consist of two structural domains, F(1) containing the extramembraneous catalytic core and F(0) containing the membrane proton channel, linked together by a central stalk and a peripheral stalk. During catalysis, ATP synthesis in the catalytic domain of F(1) is coupled via a rotary mechanism of the central stalk subunits to proton translocation. Functionally, component of the F(0) channel, it forms part of the peripheral stalk, linking F(1) to F(0). The sequence is that of ATP synthase subunit b 2 from Prosthecochloris aestuarii (strain DSM 271 / SK 413).